Here is a 163-residue protein sequence, read N- to C-terminus: Nucleotide-binding protein BCG9842_B4128 (163 aa).

This sequence belongs to the YajQ family.

Its function is as follows. Nucleotide-binding protein. The sequence is that of Nucleotide-binding protein BCG9842_B4128 from Bacillus cereus (strain G9842).